Reading from the N-terminus, the 132-residue chain is NADPH-dependent 7-cyano-7-deazaguanine reductase (132 aa).

Cysteine 48 serves as the catalytic Thioimide intermediate. The active-site Proton donor is the aspartate 55. Residues 70–72 (LEL) and 89–90 (ME) contribute to the substrate site.

This sequence belongs to the GTP cyclohydrolase I family. QueF type 1 subfamily.

Its subcellular location is the cytoplasm. It carries out the reaction 7-aminomethyl-7-carbaguanine + 2 NADP(+) = 7-cyano-7-deazaguanine + 2 NADPH + 3 H(+). It participates in tRNA modification; tRNA-queuosine biosynthesis. In terms of biological role, catalyzes the NADPH-dependent reduction of 7-cyano-7-deazaguanine (preQ0) to 7-aminomethyl-7-deazaguanine (preQ1). This is NADPH-dependent 7-cyano-7-deazaguanine reductase from Elusimicrobium minutum (strain Pei191).